A 302-amino-acid polypeptide reads, in one-letter code: Nitrophorin Cim l NP (302 aa).

The signal sequence occupies residues 1 to 20; it reads MKLLLSAGAALAFVLGLCAA. Cys-80 provides a ligand contact to heme.

The cofactor is heme b. Post-translationally, the N-terminus is blocked. Expressed in salivary glands.

The protein localises to the secreted. Its function is as follows. Heme-based protein that delivers nitric oxide gas (NO) to the victim while feeding, resulting in vasodilation. In place of heme, the heme-binding cysteine can also reversibly bind NO when it is present in high concentrations. This Cimex lectularius (Bed bug) protein is Nitrophorin Cim l NP.